The following is a 1328-amino-acid chain: MIWYVATLIASVISTRGLVAQVAHGLREEPEFVTARAGEGVVLRCDVIHPVTGQPPPYVVEWFKFGVPIPIFIKFGYYPPHVDPEYAGRASLHDKASLRLEQVRSEDQGWYECKVLMLDQQYDTFHNGSWVHLTINAPPTFTETPPQYIEAKEGGSITMTCTAFGNPKPIVTWLKEGTLLSASGKYQVSDGSLTVTSVSREDRGAYTCRAYSIQGEAVHTTHLLVQGPPFIVSPPENITVNISQDALLTCRAEAYPGNLTYTWYWQDENVYFQNDLKLRVRILIDGTLIIFRVKPEDAGKYTCVPSNSLGRSPSASAYLTVQYPARVLNMPPVIYVPVGIHGYIRCPVDAEPPATVVKWNKDGRPLQVEKNLGWTLMEDGSIRIEEATEEALGTYTCVPYNTLGTMGQSAPARLVLKDPPYFTVLPGWEYRQEAGRELLIPCAAAGDPFPVITWRKVGKPSRSKHNALPSGSLQFRALSKEDHGEWECVATNVVTSITASTHLTVIGTSPHAPGSVRVHVSMTTANVSWEPGYDGGYEQTFSVWMKRAQFGPHDWLSLSVPLGPSWLLVDSLEPETAYQFSVLAQNRLGTSAFSEVVTVNTLAFPVTTPEPLVLVTPPRCLTANRTQQGVLLSWLPPANHSFPIDRYIMEFRVGERWEMLDDAIPGTDGEFFAKDLSQDTWYEFRVLAVMQDLISEPSNIAGVSSTDIFPQPDLTDDGLARPVLAGIVATICFLAAAILFSTLAACFVNKQRKRKLKRKKDPPLSITHCRKSLESPLSSGKVSPESIRTLRAPSESSDDQGQPAAKRMLSPTREKELSLYKKTKRAISSRKYSVAKAEAEAEATTPIELISRGPDGRFVMGPSEMEPSVKGRRIEGFPFAEETDMYPEFRQSDEENEDPLVPTSVAALKPQLTPMSSSQDSYLPPPAYSPRFQPRGLEGPSGLGGRLQATGQARPPAPRPFQHGQYYGYLSSSSPGEVEPPPFYMPEVGSPLSSVMSSPPLHTEGPFGHPTIPEENGENASNSTLPLTQTPTGGRSPEPWGRPEFPFGGLETPAMMFPHQLHPCDVAESLQPKPCLPRGLPPAPLQVPAAYPGMLSLEAPKGWVGKSPGRGPIPAPPATKWQERPMQPLVSQGQLRHTSQGMGIPVLPYPEPAEPGGHGGPSTFGLDTRWYEPQPRPRPSPRQARRAEPSLHQVVLQPSRLSPLTQSPLSSRTGSPELAARARPRPGLLQQAEMSEITLQPPAAVSFSRKSTPSSTGSPSQSSRSGSPSYRPTMGFTTLATGYPSPPPGPAPPAPGDNLDVFGQTPSPRRMGEEPLRPEPPTTLPTSG.

Residues 1-20 (MIWYVATLIASVISTRGLVA) form the signal peptide. Residues 21–722 (QVAHGLREEP…DLTDDGLARP (702 aa)) are Extracellular-facing. Ig-like domains are found at residues 30–115 (PEFV…ECKV), 139–226 (PTFT…LLVQ), 228–320 (PPFI…AYLT), 324–415 (PARV…ARLV), and 420–504 (PYFT…THLT). Disulfide bonds link Cys-45/Cys-113 and Cys-161/Cys-208. Asn-241 and Asn-258 each carry an N-linked (GlcNAc...) asparagine glycan. Cystine bridges form between Cys-250–Cys-303, Cys-346–Cys-397, and Cys-442–Cys-488. 2 consecutive Fibronectin type-III domains span residues 512 to 604 (APGS…TLAF) and 614 to 708 (LVTP…STDI). Residue Asn-624 is glycosylated (N-linked (GlcNAc...) asparagine). Residues 723–743 (VLAGIVATICFLAAAILFSTL) traverse the membrane as a helical segment. Residues 744–1328 (AACFVNKQRK…EPPTTLPTSG (585 aa)) lie on the Cytoplasmic side of the membrane. Disordered regions lie at residues 758 to 817 (RKKD…EKEL), 914 to 1040 (PMSS…PEPW), and 1107 to 1328 (SPGR…PTSG). Phosphoserine occurs at positions 775, 783, and 794. Over residues 990–1001 (SPLSSVMSSPPL) the composition is skewed to low complexity. 3 stretches are compositionally biased toward polar residues: residues 1018 to 1033 (ENAS…TPTG), 1129 to 1141 (LVSQ…TSQG), and 1199 to 1214 (SRLS…SRTG). The residue at position 1136 (Arg-1136) is an Omega-N-methylarginine. Phosphoserine is present on residues Ser-1207 and Ser-1215. A compositionally biased stretch (low complexity) spans 1246–1273 (SFSRKSTPSSTGSPSQSSRSGSPSYRPT). Composition is skewed to pro residues over residues 1284–1295 (PSPPPGPAPPAP) and 1318–1328 (PEPPTTLPTSG).

The protein belongs to the immunoglobulin superfamily. Turtle family. Found in a complex with MAGI2 and NLGN2, where it interacts with MAGI2 (via PDZ 5 and PDZ 6 domains). In terms of processing, N-glycosylated and sialylated. Not significantly O-glycosylated. As to expression, detected primarily in brain, including cortex, hippocampus, cerebellum and striatum. Largely restricted to inhibitory GABAergic interneurons (at protein level).

Its subcellular location is the postsynaptic cell membrane. The protein resides in the postsynaptic density. In terms of biological role, transmembrane protein which is abundantly expressed in interneurons, where it may regulate inhibitory synapse development. May mediate homophilic cell adhesion. The chain is Protein turtle homolog B from Rattus norvegicus (Rat).